Here is an 819-residue protein sequence, read N- to C-terminus: MSRFFLKTYEYDSTSSGEEEDLLSQSEEDLVSSSSEEELSDDSFFNDSDESSDNDEDNDSDSKPYGPDWFKKPEFRKGGGSGANKFLKSTNYSSDEDSSDEEDGKKVVKSAKEKLLDEMKSIYQKIDSAEAQQDWESLLNHLETILKLYTKAQQQNYGTPNIFVKSLARFEDAVSATSQDEIKNKAVARAYNTTKQRVKKLIRENETSVKAYRENPEDFDKEPVLDADIDSRDVSATPFSLSGKKNLDLASVANNISELDFFKTLNIIIDSRGKKNTDHTEQIKTTEELLKIAKTPYEKICTYLNLIPIRFDASVSLSYQPLEQWKASKDNLDGLLEVLEQEIDHYQVTEFAPRNDFIEDEPEANEHGVKEILGSIFSMVERLDDEFSKSLLNIDTRSSEYMERLRDEQSIYNLIIRSQLYFERVTAEEHRDRLLARVFNRRLEHIYYKSDKLISIMETVAWKQIREGTASLESSFVRLNESDSADADYNFKVISELSDFLIKQKSNNVFNYRKGTLYKTYYIALNQEYAPAKKIMLSSDIAKFISGSDAALQILYNRCVIQLGLAAFKAGLINECHQVLNGLCINPHLREILGQQSLQRANANSNVVQGAPVEQLCLPFHQHINLDLIDTVYMTCSLLLDVPHMAAYYSGIKVKRIPVFQKSIRRILESSEKAIFHGPPETLRDHILYAAKSMQKGDYLQSIEYLRKISVWSLLSKSDDIINQLSEKVQIETLKTYIFTYKRFYSKISISKLSKLFDLDIEKVLAVAQNIINDYEVKAKLDENNEYIIFERGEEITKLEEVAIKLVKETKYHSERLRQ.

The tract at residues 1–106 (MSRFFLKTYE…DSSDEEDGKK (106 aa)) is disordered. Acidic residues-rich tracts occupy residues 17 to 41 (GEEE…ELSD) and 47 to 59 (DSDE…EDND). One can recognise a PCI domain in the interval 620 to 795 (FHQHINLDLI…EYIIFERGEE (176 aa)).

It belongs to the eIF-3 subunit C family. As to quaternary structure, component of the eukaryotic translation initiation factor 3 (eIF-3) complex.

Its subcellular location is the cytoplasm. Component of the eukaryotic translation initiation factor 3 (eIF-3) complex, which is involved in protein synthesis of a specialized repertoire of mRNAs and, together with other initiation factors, stimulates binding of mRNA and methionyl-tRNAi to the 40S ribosome. The eIF-3 complex specifically targets and initiates translation of a subset of mRNAs involved in cell proliferation. This is Eukaryotic translation initiation factor 3 subunit C from Kluyveromyces lactis (strain ATCC 8585 / CBS 2359 / DSM 70799 / NBRC 1267 / NRRL Y-1140 / WM37) (Yeast).